A 557-amino-acid polypeptide reads, in one-letter code: Dihydroxy-acid dehydratase (557 aa).

Position 50 (cysteine 50) interacts with [2Fe-2S] cluster. Mg(2+) is bound at residue aspartate 82. Cysteine 123 contacts [2Fe-2S] cluster. Mg(2+) is bound by residues aspartate 124 and lysine 125. Position 125 is an N6-carboxylysine (lysine 125). Residue cysteine 195 participates in [2Fe-2S] cluster binding. Glutamate 447 serves as a coordination point for Mg(2+). The active-site Proton acceptor is the serine 473.

This sequence belongs to the IlvD/Edd family. As to quaternary structure, homodimer. It depends on [2Fe-2S] cluster as a cofactor. Mg(2+) serves as cofactor.

The enzyme catalyses (2R)-2,3-dihydroxy-3-methylbutanoate = 3-methyl-2-oxobutanoate + H2O. It catalyses the reaction (2R,3R)-2,3-dihydroxy-3-methylpentanoate = (S)-3-methyl-2-oxopentanoate + H2O. It participates in amino-acid biosynthesis; L-isoleucine biosynthesis; L-isoleucine from 2-oxobutanoate: step 3/4. The protein operates within amino-acid biosynthesis; L-valine biosynthesis; L-valine from pyruvate: step 3/4. Functionally, functions in the biosynthesis of branched-chain amino acids. Catalyzes the dehydration of (2R,3R)-2,3-dihydroxy-3-methylpentanoate (2,3-dihydroxy-3-methylvalerate) into 2-oxo-3-methylpentanoate (2-oxo-3-methylvalerate) and of (2R)-2,3-dihydroxy-3-methylbutanoate (2,3-dihydroxyisovalerate) into 2-oxo-3-methylbutanoate (2-oxoisovalerate), the penultimate precursor to L-isoleucine and L-valine, respectively. The chain is Dihydroxy-acid dehydratase from Burkholderia mallei (strain NCTC 10247).